The sequence spans 137 residues: Large ribosomal subunit protein uL16 (137 aa).

This sequence belongs to the universal ribosomal protein uL16 family. Part of the 50S ribosomal subunit.

In terms of biological role, binds 23S rRNA and is also seen to make contacts with the A and possibly P site tRNAs. The polypeptide is Large ribosomal subunit protein uL16 (Chelativorans sp. (strain BNC1)).